Consider the following 350-residue polypeptide: Methionine import ATP-binding protein MetN (350 aa).

In terms of domain architecture, ABC transporter spans 2 to 241; the sequence is IQIKNLKKEY…PQAPVTRSFV (240 aa). 38–45 is an ATP binding site; it reads GHSGAGKS.

Belongs to the ABC transporter superfamily. Methionine importer (TC 3.A.1.24) family. The complex is composed of two ATP-binding proteins (MetN), two transmembrane proteins (MetI) and a solute-binding protein (MetQ).

The protein localises to the cell inner membrane. It catalyses the reaction L-methionine(out) + ATP + H2O = L-methionine(in) + ADP + phosphate + H(+). The enzyme catalyses D-methionine(out) + ATP + H2O = D-methionine(in) + ADP + phosphate + H(+). Part of the ABC transporter complex MetNIQ involved in methionine import. Responsible for energy coupling to the transport system. This chain is Methionine import ATP-binding protein MetN, found in Francisella tularensis subsp. holarctica (strain LVS).